The following is a 167-amino-acid chain: I-Kappa-B like protein I1 (167 aa).

3 ANK repeats span residues 54–86 (HGKQCVHIVSNPGIADPQEKLKLLMEWGADING), 91–121 (FGNTPLHIAAYTQNHKLATWLCNQPGINMGI), and 125–154 (LFKTPYYVACERHDIKIMNILRAKGGQCRI).

Belongs to the polydnaviridae I-Kappa-B-like protein family.

Functionally, suppresses the host immune response through NF-kappa-B inactivation. Possesses ankyrin repeat domains required for NF-kappa-B binding but lacks the regulatory regions required for dissociation from NF-kappa-B and degradation. Therefore, prevents host NF-kappa-B release and subsequent activation. The chain is I-Kappa-B like protein I1 (I1) from Microplitis demolitor (Parasitoid wasp).